A 146-amino-acid polypeptide reads, in one-letter code: D-aminoacyl-tRNA deacylase (146 aa).

Positions 137–138 (GP) match the Gly-cisPro motif, important for rejection of L-amino acids motif.

The protein belongs to the DTD family. As to quaternary structure, homodimer.

Its subcellular location is the cytoplasm. It catalyses the reaction glycyl-tRNA(Ala) + H2O = tRNA(Ala) + glycine + H(+). It carries out the reaction a D-aminoacyl-tRNA + H2O = a tRNA + a D-alpha-amino acid + H(+). Functionally, an aminoacyl-tRNA editing enzyme that deacylates mischarged D-aminoacyl-tRNAs. Also deacylates mischarged glycyl-tRNA(Ala), protecting cells against glycine mischarging by AlaRS. Acts via tRNA-based rather than protein-based catalysis; rejects L-amino acids rather than detecting D-amino acids in the active site. By recycling D-aminoacyl-tRNA to D-amino acids and free tRNA molecules, this enzyme counteracts the toxicity associated with the formation of D-aminoacyl-tRNA entities in vivo and helps enforce protein L-homochirality. The sequence is that of D-aminoacyl-tRNA deacylase from Desulfatibacillum aliphaticivorans.